The sequence spans 237 residues: MWLDWFFPIEMLVVGLSGGVATGKSTVSSVFRAHGVPIIDADQVARQVVVPGTSTYNRLRKEFGDEYFDDEHGGVLRRDKLGKLIFSNPEKRKALNGITHPAIRWEMFKQFLTLLITGTKYIVFDTPLLFESGYDKWIGTTIVVWCDFEQEVERMVTRDNISRADAESRIHAQMDIEEKKKRAKIVIDNNGNIDELREKVKHVIAQLDKSWKPYIFRVAFGIILGVVPYYFFKYIRS.

The DPCK domain maps to 13-218 (VVGLSGGVAT…KSWKPYIFRV (206 aa)). Position 18 to 25 (18 to 25 (GGVATGKS)) interacts with ATP.

Belongs to the CoaE family.

This is an uncharacterized protein from Caenorhabditis elegans.